Reading from the N-terminus, the 81-residue chain is N.vectensis toxin 4 (81 aa).

The signal sequence occupies residues 1–20 (MRSSWMFVICFAMLILYTNG). Cystine bridges form between C46–C75, C48–C70, and C63–C76.

In terms of tissue distribution, expressed in ectodermal gland cells. In adult female tissues, highly transcribed in mesenteries (gametes-producing tissue) and slightly transcribed in tentacles, pharynx and physa.

Has toxic effects on zebrafish larvae. It causes contractile paralysis and twitching of the tail within 30 minutes, followed by death within 40 minutes. Does not show any toxicity when injected into arthropods (cherry shrimps or grass shrimps). The chain is N.vectensis toxin 4 from Nematostella vectensis (Starlet sea anemone).